Reading from the N-terminus, the 279-residue chain is Putative ABC transporter ATP-binding protein GSU3001 (279 aa).

Positions 1-237 (MRFSVDLKAY…PAEMESVKLR (237 aa)) constitute an ABC transporter domain. Residue 36 to 43 (GSNGSGKT) coordinates ATP.

The protein belongs to the ABC transporter superfamily.

The protein localises to the cell inner membrane. Probably part of an ABC transporter complex. Responsible for energy coupling to the transport system. This chain is Putative ABC transporter ATP-binding protein GSU3001, found in Geobacter sulfurreducens (strain ATCC 51573 / DSM 12127 / PCA).